The chain runs to 463 residues: MGGMPELKLYNTLTREETVFAPIDPDNVRMYVCGPTVYDFAHIGNARPVIVFDVLFRLLRHVYGEDHVTYARNITDVDDKINARALRDHPGLPLNQAIRAVTERTETQFHADVAELGCLEPSVEPRATDNIVEMTEIIEKLIGNGHAYVAAGEVLFDTKSMADYGQLSKRPLDEQQAGARIAVDAHKKNSGDFVLWKLSSHNEPGWESPWGRGRPGWHIECSAMSKRYLGDVFDIHGGGLDLIFPHHENEIAQSRCAHGTEVMANIWMHNGFLQVEGRKMSKSEGNFVTIHDLLHTQIFGGRKWPGEVLRLAMLMTHYREPIDFSIKRLEEAERLLAKWPATEPGDAEPDETVLNALADNLNTVAAVQALHALAQAAHTDPAAGARFAATAALLGLLPKKAEIDEAVAAAVDALVAMRLEMLKAKNFAEADKIRDELTAKGIQLKDGKDAATGERVTTWEVKR.

Residue Cys-33 participates in Zn(2+) binding. The 'HIGH' region motif lies at Pro-35–Asn-45. The Zn(2+) site is built by Cys-221, His-246, and Glu-250. Positions Lys-279 to Ser-283 match the 'KMSKS' region motif. Lys-282 contacts ATP.

This sequence belongs to the class-I aminoacyl-tRNA synthetase family. As to quaternary structure, monomer. The cofactor is Zn(2+).

It is found in the cytoplasm. The catalysed reaction is tRNA(Cys) + L-cysteine + ATP = L-cysteinyl-tRNA(Cys) + AMP + diphosphate. This chain is Cysteine--tRNA ligase, found in Rhizobium leguminosarum bv. trifolii (strain WSM2304).